Here is a 395-residue protein sequence, read N- to C-terminus: Leukosialin (395 aa).

Residues methionine 1–proline 19 form the signal peptide. Residues aspartate 20–glycine 248 lie on the Extracellular side of the membrane. The span at methionine 27–valine 56 shows a compositional bias: polar residues. Residues methionine 27–glutamate 245 are disordered. Residues serine 73–serine 88 are compositionally biased toward low complexity. 2 stretches are compositionally biased toward polar residues: residues alanine 89–serine 111 and threonine 145–glycine 154. Low complexity predominate over residues threonine 155–serine 166. N-linked (GlcNAc...) asparagine glycosylation is present at asparagine 167. The segment covering asparagine 167–proline 196 has biased composition (polar residues). Over residues alanine 205–serine 241 the composition is skewed to low complexity. Residues methionine 249–tryptophan 271 form a helical membrane-spanning segment. The tract at residues arginine 272–arginine 302 is required for interaction with EZR, MSN and RDX and for co-localization to microvilli. At arginine 272–leucine 395 the chain is on the cytoplasmic side. A Nuclear localization signal motif is present at residues lysine 276 to arginine 290. Residues serine 285 and serine 328 each carry the phosphoserine modification. The tract at residues valine 303–leucine 395 is disordered. Residues glycine 327 to phenylalanine 338 are compositionally biased toward polar residues. A Phosphothreonine modification is found at threonine 333. Phosphoserine is present on residues serine 339 and serine 343. Serine 347 is modified (phosphoserine; by PKC/PRKCQ). Position 371 is a phosphoserine (serine 371). Threonine 378 carries the phosphothreonine modification. Residues glutamine 385–leucine 395 show a composition bias toward basic and acidic residues.

Interacts with SIGLEC1. In terms of assembly, interacts with isoform 2 of HIPK2. Interacts with CTNNB1. Interacts with RDX (via FERM domain). Interacts with EZR. Interacts with MSN. Phosphorylation at Ser-347 is regulated by chemokines, requires its association with ERM proteins (EZR, RDX and MSN) and is essential for its function in the regulation of T-cell trafficking to lymph nodes. Post-translationally, has a high content of sialic acid and O-linked carbohydrate structures. In terms of processing, cleavage by CTSG releases its extracellular domain and triggers its intramembrane proteolysis by gamma-secretase releasing the CD43 cytoplasmic tail chain (CD43-ct) which translocates to the nucleus. Sumoylated. As to expression, cell surface of thymocytes, T-lymphocytes, neutrophils, plasma cells and myelomas.

It localises to the membrane. It is found in the cell projection. The protein localises to the microvillus. The protein resides in the uropodium. Its subcellular location is the nucleus. It localises to the PML body. Predominant cell surface sialoprotein of leukocytes which regulates multiple T-cell functions, including T-cell activation, proliferation, differentiation, trafficking and migration. Positively regulates T-cell trafficking to lymph-nodes via its association with ERM proteins (EZR, RDX and MSN). Negatively regulates Th2 cell differentiation and predisposes the differentiation of T-cells towards a Th1 lineage commitment. Promotes the expression of IFN-gamma by T-cells during T-cell receptor (TCR) activation of naive cells and induces the expression of IFN-gamma by CD4(+) T-cells and to a lesser extent by CD8(+) T-cells. Plays a role in preparing T-cells for cytokine sensing and differentiation into effector cells by inducing the expression of cytokine receptors IFNGR and IL4R, promoting IFNGR and IL4R signaling and by mediating the clustering of IFNGR with TCR. Acts as a major E-selectin ligand responsible for Th17 cell rolling on activated vasculature and recruitment during inflammation. Mediates Th17 cells, but not Th1 cells, adhesion to E-selectin. Acts as a T-cell counter-receptor for SIGLEC1. Functionally, protects cells from apoptotic signals, promoting cell survival. In Mus musculus (Mouse), this protein is Leukosialin (Spn).